The following is a 1609-amino-acid chain: Factor-induced gene 2 protein (1609 aa).

The first 22 residues, 1 to 22 (MNSFASLGLIYSVVNLLTRVEA), serve as a signal peptide directing secretion. A glycan (N-linked (GlcNAc...) asparagine) is linked at N29. Disordered regions lie at residues 129–165 (SSTL…SSTS), 196–243 (SSEI…EPLS), and 266–312 (TIPT…NYDV). Over residues 137–148 (QPHRTSHSSSSF) the composition is skewed to polar residues. The span at 150 to 165 (LPVTAPSSSSLPSSTS) shows a compositional bias: low complexity. The span at 196–212 (SSEISGSTSPKSLESFD) shows a compositional bias: polar residues. Composition is skewed to low complexity over residues 213 to 243 (TTGT…EPLS) and 274 to 285 (TSSLPPTLRSSS). Residue N231 is glycosylated (N-linked (GlcNAc...) asparagine). Residues 286-312 (MAPTSGSDSISHNFTSPPSKTSGNYDV) show a composition bias toward polar residues. N-linked (GlcNAc...) asparagine glycans are attached at residues N298, N347, N386, N426, N495, N535, N661, N674, and N713. Positions 846-876 (ATSEATSTSTQVSATSATATASESSTTSQVS) are disordered. Residues N889, N907, and N1079 are each glycosylated (N-linked (GlcNAc...) asparagine). Residues 1231–1243 (CTQDVPTQSSSPA) are compositionally biased toward polar residues. Residues 1231 to 1259 (CTQDVPTQSSSPASTLAYSPSVSTSSSSS) are disordered. Low complexity predominate over residues 1244-1259 (STLAYSPSVSTSSSSS). N1400 carries N-linked (GlcNAc...) asparagine glycosylation. Residue G1588 is the site of GPI-anchor amidated glycine attachment. A propeptide spans 1589-1609 (SASKFLCSKFFMIMVMVINFI) (removed in mature form).

Post-translationally, N-glycosylated.

It is found in the secreted. It localises to the cell wall. The protein localises to the membrane. In terms of biological role, required for efficient mating. Plays a role in maintenance of cell wall integrity during mating. Important for mating cell projection shape and conjugation bridge diameter. Plays a role in cell fusion and nuclear migration. This is Factor-induced gene 2 protein (FIG2) from Saccharomyces cerevisiae (strain ATCC 204508 / S288c) (Baker's yeast).